Here is a 333-residue protein sequence, read N- to C-terminus: Autoinducer 2 import system permease protein LsrD (333 aa).

10 helical membrane passes run Tyr7–Ala27, Ile45–Ile65, Thr70–Ala90, Ala91–Leu111, Leu118–Ile138, Leu162–Phe182, Thr212–Val232, Ser240–Asn260, Ile261–Leu281, and Ala288–Val308.

Belongs to the binding-protein-dependent transport system permease family. AraH/RbsC subfamily. The complex is composed of two ATP-binding proteins (LsrA), two transmembrane proteins (LsrC and LsrD) and a solute-binding protein (LsrB).

It localises to the cell inner membrane. In terms of biological role, part of the ABC transporter complex LsrABCD involved in autoinducer 2 (AI-2) import. Probably responsible for the translocation of the substrate across the membrane. In Photorhabdus laumondii subsp. laumondii (strain DSM 15139 / CIP 105565 / TT01) (Photorhabdus luminescens subsp. laumondii), this protein is Autoinducer 2 import system permease protein LsrD (lsrD).